The chain runs to 344 residues: MSNAITMGIFWHLIGAASAACFYAPFKQVKQWSWETMWSIGGIVSWLILPWTISALLLPDFWAYYSSFNLSTLLPVFLFGAMWGIGNINYGLTMRYLGMSMGIGIAIGITLIVGTLMTPIINGNFDVLINTEGGRMTLLGVLVALIGVGIVTRAGQLKERKMGITAEEFNLKKGLLLAVMCGIFSAGMSFAMNAAKPMHEAAAALGVDPLYVALPSYVVIMGGGALINLGFCFVRLAKVKNLSIKADFSLAKSMIITNILLSALGGLMWYLQFFFYAWGHARIPPQYDYISWMLHMSFYVLCGGIVGLVLKEWKNAGRRPVSVLSLGCVVIIIAANIVGMGMAS.

A run of 10 helical transmembrane segments spans residues 4-24 (AITM…CFYA), 38-58 (WSIG…ALLL), 68-88 (FNLS…IGNI), 101-121 (MGIG…TPII), 137-157 (TLLG…AGQL), 175-195 (LLLA…MNAA), 214-234 (LPSY…FCFV), 259-279 (ILLS…YAWG), 290-310 (ISWM…GLVL), and 323-343 (VLSL…MGMA).

Belongs to the L-rhamnose transporter (TC 2.A.7.6) family.

The protein resides in the cell inner membrane. The catalysed reaction is L-rhamnopyranose(in) + H(+)(in) = L-rhamnopyranose(out) + H(+)(out). Uptake of L-rhamnose across the cytoplasmic membrane with the concomitant transport of protons into the cell (symport system). This Citrobacter koseri (strain ATCC BAA-895 / CDC 4225-83 / SGSC4696) protein is L-rhamnose-proton symporter.